The primary structure comprises 468 residues: Probable xyloglucan galactosyltransferase GT13 (468 aa).

Over 1–18 the chain is Cytoplasmic; the sequence is MDKFNPKKEKTVKKRALK. The helical; Signal-anchor for type II membrane protein transmembrane segment at 19–35 threads the bilayer; that stretch reads VLTEISPTPLFSMLFLL. The Lumenal segment spans residues 36–468; it reads HISQIATYLS…RVSLFKMTRI (433 aa). 5 N-linked (GlcNAc...) asparagine glycosylation sites follow: N53, N116, N153, N240, and N412.

This sequence belongs to the glycosyltransferase 47 family. As to expression, expressed in roots, hypocotyls, cotyledons, leaves, stems, petals and carpels.

The protein resides in the golgi apparatus membrane. Functionally, functions in xyloglucan synthesis by adding side chains to the xylosylated glucan backbone. Involved in the galactosylation of hemicellulose xyloglucan. In Arabidopsis thaliana (Mouse-ear cress), this protein is Probable xyloglucan galactosyltransferase GT13.